A 45-amino-acid chain; its full sequence is Large ribosomal subunit protein bL34 (45 aa).

The segment at 23-45 (ETPGGKKVLSARRAKGRKNLIAK) is disordered. A compositionally biased stretch (basic residues) spans 31 to 45 (LSARRAKGRKNLIAK).

The protein belongs to the bacterial ribosomal protein bL34 family.

This chain is Large ribosomal subunit protein bL34, found in Elusimicrobium minutum (strain Pei191).